A 99-amino-acid polypeptide reads, in one-letter code: NADH-quinone oxidoreductase subunit K (99 aa).

3 helical membrane passes run 3–23 (PDNYLYLSALLFTIGAAGVLL), 28–48 (IVMFMCIELMLNAANLAFVTF), and 59–79 (VVAFFTMVVAACEVVIGLAII).

The protein belongs to the complex I subunit 4L family. NDH-1 is composed of 14 different subunits. Subunits NuoA, H, J, K, L, M, N constitute the membrane sector of the complex.

It localises to the cell membrane. It catalyses the reaction a quinone + NADH + 5 H(+)(in) = a quinol + NAD(+) + 4 H(+)(out). Its function is as follows. NDH-1 shuttles electrons from NADH, via FMN and iron-sulfur (Fe-S) centers, to quinones in the respiratory chain. The immediate electron acceptor for the enzyme in this species is believed to be a menaquinone. Couples the redox reaction to proton translocation (for every two electrons transferred, four hydrogen ions are translocated across the cytoplasmic membrane), and thus conserves the redox energy in a proton gradient. The polypeptide is NADH-quinone oxidoreductase subunit K (Mycolicibacterium vanbaalenii (strain DSM 7251 / JCM 13017 / BCRC 16820 / KCTC 9966 / NRRL B-24157 / PYR-1) (Mycobacterium vanbaalenii)).